The sequence spans 118 residues: UPF0344 protein YisL (118 aa).

The next 4 helical transmembrane spans lie at 4 to 24 (LHITTWVVALILLFVSYSLYS), 33 to 53 (ITHMILRLFYILIILTGAELF), 62 to 82 (EYAGKMILGIITIGLMEMLLI), and 93 to 113 (LWVGFVIVLLLTVLLGLHLPI).

The protein belongs to the UPF0344 family.

The protein resides in the cell membrane. The protein is UPF0344 protein YisL (yisL) of Bacillus subtilis (strain 168).